A 149-amino-acid polypeptide reads, in one-letter code: Calmodulin-3 (149 aa).

Ala2 carries the post-translational modification N-acetylalanine. EF-hand domains lie at 8 to 43, 44 to 79, 81 to 116, and 117 to 149; these read DQIA…LGQN, PTEA…KMKD, DSEE…LGEK, and LTDE…MMAK. Asp21, Asp23, Asp25, Cys27, Glu32, Asp57, Asp59, Asn61, Thr63, Glu68, Asp94, Asp96, Asn98, and Glu105 together coordinate Ca(2+). Position 116 is an N6,N6,N6-trimethyllysine (Lys116). 5 residues coordinate Ca(2+): Asp130, Asp132, Asp134, Gln136, and Glu141.

The protein belongs to the calmodulin family.

Functionally, calmodulin mediates the control of a large number of enzymes, ion channels and other proteins by Ca(2+). Among the enzymes to be stimulated by the calmodulin-Ca(2+) complex are a number of protein kinases and phosphatases. The sequence is that of Calmodulin-3 (CAM3) from Oryza sativa subsp. japonica (Rice).